The sequence spans 224 residues: NBPF family member NBPF6-like protein (224 aa).

In terms of domain architecture, Olduvai spans 159–224 (ENHHDRKDEE…ASVCDVQDQL (66 aa)). Residues 198-209 (YLTHSSHHDSHR) show a composition bias toward basic and acidic residues. Residues 198 to 224 (YLTHSSHHDSHRPPSSIASVCDVQDQL) are disordered.

It belongs to the NBPF family.

This Bos taurus (Bovine) protein is NBPF family member NBPF6-like protein.